Consider the following 290-residue polypeptide: Eukaryotic translation initiation factor 3 subunit F-2 (290 aa).

The 139-residue stretch at 12 to 150 (VRLQPLVLFQ…TRLYCAVTMG (139 aa)) folds into the MPN domain.

The protein belongs to the eIF-3 subunit F family. Component of the eukaryotic translation initiation factor 3 (eIF-3) complex. The eIF-3 complex interacts with pix.

It localises to the cytoplasm. Its function is as follows. Component of the eukaryotic translation initiation factor 3 (eIF-3) complex, which is involved in protein synthesis of a specialized repertoire of mRNAs and, together with other initiation factors, stimulates binding of mRNA and methionyl-tRNAi to the 40S ribosome. The eIF-3 complex specifically targets and initiates translation of a subset of mRNAs involved in cell proliferation. The chain is Eukaryotic translation initiation factor 3 subunit F-2 from Drosophila mojavensis (Fruit fly).